A 499-amino-acid chain; its full sequence is Glycerol kinase (499 aa).

ADP is bound at residue Thr13. Residues Thr13, Thr14, and Ser15 each coordinate ATP. Sn-glycerol 3-phosphate is bound at residue Thr13. Arg17 is an ADP binding site. Arg83, Glu84, Tyr136, and Asp246 together coordinate sn-glycerol 3-phosphate. Positions 83, 84, 136, 246, and 247 each coordinate glycerol. Thr268 and Gly311 together coordinate ADP. Positions 268, 311, 315, and 412 each coordinate ATP. The ADP site is built by Gly412 and Asn416.

Belongs to the FGGY kinase family.

It catalyses the reaction glycerol + ATP = sn-glycerol 3-phosphate + ADP + H(+). Its pathway is polyol metabolism; glycerol degradation via glycerol kinase pathway; sn-glycerol 3-phosphate from glycerol: step 1/1. Its activity is regulated as follows. Inhibited by fructose 1,6-bisphosphate (FBP). Key enzyme in the regulation of glycerol uptake and metabolism. Catalyzes the phosphorylation of glycerol to yield sn-glycerol 3-phosphate. This chain is Glycerol kinase, found in Francisella philomiragia subsp. philomiragia (strain ATCC 25017 / CCUG 19701 / FSC 153 / O#319-036).